A 284-amino-acid chain; its full sequence is Tropomyosin (284 aa).

Residues 1–41 (MDAIKKKMQAMKLEKDNAVDRAETAEQQSRDAALRAEKAEE) form a disordered region. A coiled-coil region spans residues 1–284 (MDAIKKKMQA…DQTFSELTGY (284 aa)). Basic and acidic residues predominate over residues 12–41 (KLEKDNAVDRAETAEQQSRDAALRAEKAEE).

This sequence belongs to the tropomyosin family. In terms of assembly, homodimer.

Tropomyosin, in association with the troponin complex, plays a central role in the calcium dependent regulation of muscle contraction. This chain is Tropomyosin, found in Haemaphysalis longicornis (Bush tick).